Reading from the N-terminus, the 416-residue chain is Ena/VASP-like protein (416 aa).

The 112-residue stretch at 1-112 folds into the WH1 domain; sequence MSEQSICQAR…NAMLFALNIM (112 aa). Over residues 114–129 the composition is skewed to polar residues; sequence SQEGGPSSQRQVQNGP. Disordered regions lie at residues 114–133 and 141–369; these read SQEG…SPDE and VMEQ…PAGS. S130 is subject to Phosphoserine. Over residues 141 to 157 the composition is skewed to basic and acidic residues; sequence VMEQHQQQRQESLERRT. A compositionally biased stretch (low complexity) spans 169 to 180; that stretch reads PSSAASAPVSCS. The span at 181 to 206 shows a compositional bias: pro residues; it reads GPPPPPPPPVPPPPTGATPPPPPPLP. The interval 222 to 242 is EVH2 block A; sequence GLAAAIAGAKLRRVQRPEDAS. The interval 222 to 413 is EVH2; the sequence is GLAAAIAGAK…DAIRQELSGI (192 aa). Positions 231–234 match the KLKR motif; it reads KLRR. Residues 242–253 show a composition bias toward low complexity; that stretch reads SGGSSPSGTSKS. Phosphoserine occurs at positions 246 and 259. The segment at 265 to 282 is EVH2 block B; that stretch reads GGLMEEMNKLLAKRRKAA. A compositionally biased stretch (polar residues) spans 299–320; sequence EDPSTSPSPGTRAASQPPNSSE. Phosphoserine occurs at positions 304, 306, 329, 331, 341, 349, 354, and 369. Basic and acidic residues predominate over residues 321–331; that stretch reads AGRKPWERSNS. The required for interaction with ZDHHC17 stretch occupies residues 342 to 362; the sequence is RTPSVAKSPEAKSPLQSQPHS. The interval 379-413 is EVH2 block C; it reads DLDRMKQEILEEVVRELHKVKEEIIDAIRQELSGI.

This sequence belongs to the Ena/VASP family. In terms of assembly, homotetramer. Binds to the SH3 domains of ABL1, LYN and SRC. Also binds to profilin, with preference for isoform IIa of PFN2, and the WW domain of APBB1/FE65. Binds to SEMA6A. Interacts, via the Pro-rich region, with the C-terminal SH3 domain of DNMBP. Interacts with RAPH1. Binds, via the EVH1 domain, the Pro-rich domain of Listeria monocytogenes actA. Binds, via the EVH1 domain, the Pro-rich domain of ZYX. Interacts with FYB1. Interacts with ZDHHC17. In terms of processing, phosphorylated by PKA; phosphorylation abolishes binding to SH3 domains of ABL and SRC.

The protein resides in the cytoplasm. Its subcellular location is the cytoskeleton. It is found in the stress fiber. The protein localises to the cell projection. It localises to the lamellipodium. In terms of biological role, ena/VASP proteins are actin-associated proteins involved in a range of processes dependent on cytoskeleton remodeling and cell polarity such as axon guidance and lamellipodial and filopodial dynamics in migrating cells. EVL enhances actin nucleation and polymerization. This is Ena/VASP-like protein (EVL) from Homo sapiens (Human).